The sequence spans 64 residues: Large ribosomal subunit protein uL29 (64 aa).

The protein belongs to the universal ribosomal protein uL29 family.

The chain is Large ribosomal subunit protein uL29 from Lacticaseibacillus paracasei (strain ATCC 334 / BCRC 17002 / CCUG 31169 / CIP 107868 / KCTC 3260 / NRRL B-441) (Lactobacillus paracasei).